Here is a 250-residue protein sequence, read N- to C-terminus: 1-(5-phosphoribosyl)-5-[(5-phosphoribosylamino)methylideneamino] imidazole-4-carboxamide isomerase (250 aa).

Residue aspartate 8 is the Proton acceptor of the active site. The active-site Proton donor is aspartate 129.

This sequence belongs to the HisA/HisF family.

The protein resides in the cytoplasm. The enzyme catalyses 1-(5-phospho-beta-D-ribosyl)-5-[(5-phospho-beta-D-ribosylamino)methylideneamino]imidazole-4-carboxamide = 5-[(5-phospho-1-deoxy-D-ribulos-1-ylimino)methylamino]-1-(5-phospho-beta-D-ribosyl)imidazole-4-carboxamide. It functions in the pathway amino-acid biosynthesis; L-histidine biosynthesis; L-histidine from 5-phospho-alpha-D-ribose 1-diphosphate: step 4/9. The sequence is that of 1-(5-phosphoribosyl)-5-[(5-phosphoribosylamino)methylideneamino] imidazole-4-carboxamide isomerase from Desulfovibrio desulfuricans (strain ATCC 27774 / DSM 6949 / MB).